Here is a 383-residue protein sequence, read N- to C-terminus: Cell division protein FtsZ (383 aa).

Residues 20-24, 107-109, Glu-138, Arg-142, and Asn-186 each bind GTP; these read GGGGN and GTG.

The protein belongs to the FtsZ family. In terms of assembly, homodimer. Polymerizes to form a dynamic ring structure in a strictly GTP-dependent manner. Interacts directly with several other division proteins.

The protein resides in the cytoplasm. Essential cell division protein that forms a contractile ring structure (Z ring) at the future cell division site. The regulation of the ring assembly controls the timing and the location of cell division. One of the functions of the FtsZ ring is to recruit other cell division proteins to the septum to produce a new cell wall between the dividing cells. Binds GTP and shows GTPase activity. This Shigella flexneri protein is Cell division protein FtsZ.